The following is a 458-amino-acid chain: Retinoic acid receptor alpha (458 aa).

A modulating region spans residues 1-86 (MASNGGSCPS…PPPLPRIYKP (86 aa)). Residues 54-68 (TPSPATIETQSTSSE) are compositionally biased toward polar residues. A disordered region spans residues 54–76 (TPSPATIETQSTSSEEIVPSPPS). 2 consecutive NR C4-type zinc fingers follow at residues 87 to 107 (CFVC…CEGC) and 123 to 147 (CHRD…LQKC). Residues 87-152 (CFVCQDKSSG…RLQKCFEVGM (66 aa)) constitute a DNA-binding region (nuclear receptor). Residues 153 to 182 (SKESVRNDRNKKKKQEAPKQECTESYIITP) are hinge. The 235-residue stretch at 183-417 (EVEDLVEKVR…PLIQEMLENS (235 aa)) folds into the NR LBD domain. The 9aaTAD signature appears at 408-416 (PLIQEMLEN). The interval 417–458 (SEGLDSLTGQPPRASSLAPPPGSCSPSLSPSSNRSSPTSHSP) is disordered. Low complexity predominate over residues 440-458 (CSPSLSPSSNRSSPTSHSP).

This sequence belongs to the nuclear hormone receptor family. NR1 subfamily. As to quaternary structure, heterodimer; with an rxr molecule. Binds DNA preferentially as a rar/rxr heterodimer. Expressed in forelimb, in the distal forelimb blastema, kidney, liver and hindlimb blastemal mesenchymal cells.

The protein localises to the nucleus. Functionally, receptor for retinoic acid. Retinoic acid receptors bind as heterodimers to their target response elements in response to their ligands, all-trans or 9-cis retinoic acid, and regulate gene expression in various biological processes. The rar/rxr heterodimers bind to the retinoic acid response elements (RARE) composed of tandem 5'-AGGTCA-3' sites known as DR1-DR5. Retinoic acid signaling appears to be involved in specifying proximal-distal axis in limb regeneration. This is Retinoic acid receptor alpha (RARA) from Notophthalmus viridescens (Eastern newt).